An 81-amino-acid chain; its full sequence is Sulfur carrier protein TusA (81 aa).

The active-site Cysteine persulfide intermediate is the Cys-19.

Belongs to the sulfur carrier protein TusA family. Interacts with IscS.

The protein resides in the cytoplasm. It functions in the pathway tRNA modification. Sulfur carrier protein involved in sulfur trafficking in the cell. Part of a sulfur-relay system required for 2-thiolation during synthesis of 2-thiouridine of the modified wobble base 5-methylaminomethyl-2-thiouridine (mnm(5)s(2)U) in tRNA. Interacts with IscS and stimulates its cysteine desulfurase activity. Accepts an activated sulfur from IscS, which is then transferred to TusD, and thus determines the direction of sulfur flow from IscS to 2-thiouridine formation. Also appears to be involved in sulfur transfer for the biosynthesis of molybdopterin. This Escherichia coli O17:K52:H18 (strain UMN026 / ExPEC) protein is Sulfur carrier protein TusA.